Consider the following 322-residue polypeptide: Ferredoxin--NADP reductase (322 aa).

Positions 87, 119, 279, and 320 each coordinate FAD.

The protein belongs to the ferredoxin--NADP reductase type 2 family. In terms of assembly, homodimer. It depends on FAD as a cofactor.

It carries out the reaction 2 reduced [2Fe-2S]-[ferredoxin] + NADP(+) + H(+) = 2 oxidized [2Fe-2S]-[ferredoxin] + NADPH. This is Ferredoxin--NADP reductase from Streptococcus suis (strain 98HAH33).